We begin with the raw amino-acid sequence, 132 residues long: DNA-binding protein inhibitor ID-2 (132 aa).

Residues 23-75 (ARSKTPVDDPMSLLYNMNDCYSKLKELVPSIPQNKKVSKMEILQHVIDYILDL) form the bHLH domain. The short motif at 105–114 (LNTDISILSL) is the Nuclear export signal element.

In terms of assembly, heterodimer with other HLH proteins.

It localises to the cytoplasm. Its subcellular location is the nucleus. In terms of biological role, transcriptional regulator (lacking a basic DNA binding domain) which negatively regulates the basic helix-loop-helix (bHLH) transcription factors by forming heterodimers and inhibiting their DNA binding and transcriptional activity. Inhibits the activity of both neurogenic (neurod1/neuroD) and myogenic (myod1/myoD) bHLH factors. May play a role in the regulation of the circadian clock. The sequence is that of DNA-binding protein inhibitor ID-2 from Xenopus tropicalis (Western clawed frog).